The primary structure comprises 797 residues: MPGAASIVAVLAALLPTALGQANQSYVDYNIEANPDLFSECLETGGTSFPDCESGPLSKTLVCDTSAKPHDRAAALVSLLTFEELVNNTANTGHGAPRIGLPAYQVWNEALHGVAHADFSDAGDFSWSTSFPQPISTMAALNRTLIHQIATIISTQGRAFMNAGRYGLDVYSPNINTFRHPVWGRGQETPGEDAYCLASTYAYEYITGIQGGVDANPLKLIATAKHYAGYDIENWDNHSRLGNDMQITQQDLAEYYTPQFLVASRDAKVHSVMCSYNAVNGVPSCSNSFFLQTLLRDTFDFVEDGYVSGDCGAVYNVFNPHGYATNESSAAADSIRAGTDIDCGVSYPRHFQESFHDQEVSRQDLERGVTRLYASLIRAGYFDGKTSPYRNITWSDVVSTNAQNLSYEAAAQSIVLLKNDGILPLTTSSSTKTIALIGPWANATTQMLGNYYGPAPYLISPLQAFQDSEYKITYTIGTNTTTDPDSTSQSTALTTAKEADLIIFAGGIDNTLETEAQDRSNITWPSNQLSLITKLADLGKPLIVLQMGGGQVDSSALKNNKNVNALIWGGYPGQSGGQALADIITGKRAPAARLVTTQYPAEYAEVFPAIDMNLRPNGSNPGQTYMWYTGTPVYEFGHGLFYTNFTASASAGSGTKNRTSFNIDEVLGRPHPGYKLVEQMPLLNFTVDVKNTGDRVSDYTAMAFVNTTAGPAPHPNKWLVGFDRLSAVEPGSAKTMVIPVTVDSLARTDEEGNRVLYPGRYEVALNNEREVVLGFTLTGEKAVLFKWPKEEQLIAPQ.

A signal peptide spans Met-1–Gly-20. Residues Asn-23, Asn-87, Asn-142, and Asn-237 are each glycosylated (N-linked (GlcNAc...) asparagine). Asp-310 is an active-site residue. N-linked (GlcNAc...) asparagine glycosylation is found at Asn-326, Asn-391, Asn-404, Asn-442, Asn-479, Asn-521, Asn-617, Asn-644, Asn-657, Asn-684, and Asn-706.

The protein belongs to the glycosyl hydrolase 3 family.

Its subcellular location is the secreted. It carries out the reaction Hydrolysis of (1-&gt;4)-beta-D-xylans, to remove successive D-xylose residues from the non-reducing termini.. The protein operates within glycan degradation; xylan degradation. Xylan 1,4-beta-xylosidase involved in the hydrolysis of xylan, a major structural heterogeneous polysaccharide found in plant biomass representing the second most abundant polysaccharide in the biosphere, after cellulose. This chain is Probable exo-1,4-beta-xylosidase xlnD (xlnD), found in Aspergillus flavus (strain ATCC 200026 / FGSC A1120 / IAM 13836 / NRRL 3357 / JCM 12722 / SRRC 167).